Consider the following 292-residue polypeptide: ATP phosphoribosyltransferase (292 aa).

This sequence belongs to the ATP phosphoribosyltransferase family. Long subfamily. The cofactor is Mg(2+).

Its subcellular location is the cytoplasm. It catalyses the reaction 1-(5-phospho-beta-D-ribosyl)-ATP + diphosphate = 5-phospho-alpha-D-ribose 1-diphosphate + ATP. It participates in amino-acid biosynthesis; L-histidine biosynthesis; L-histidine from 5-phospho-alpha-D-ribose 1-diphosphate: step 1/9. Its activity is regulated as follows. Feedback inhibited by histidine. In terms of biological role, catalyzes the condensation of ATP and 5-phosphoribose 1-diphosphate to form N'-(5'-phosphoribosyl)-ATP (PR-ATP). Has a crucial role in the pathway because the rate of histidine biosynthesis seems to be controlled primarily by regulation of HisG enzymatic activity. The chain is ATP phosphoribosyltransferase from Desulfatibacillum aliphaticivorans.